The following is a 363-amino-acid chain: MFSPTSKITTAQATIIIINYMLAAGVLTLPRTVTEQTQSPDGWISVLLGGVLAVIAGMIIAKLSQQYPKETFYEYSRHIVGKWLGHLISIVFITYFLALGAFEVRVMSEIVDFFLLEGTPSWAIIMTVLWIGLYSITQGLDPIARLFEMIFPITVIIFLTIALMSLGIFEINNLRPVLGDGIMPVLRGVKTTNLSFTCSEIMFILVAFMKKPKNAVKAVVIGTGVVTSFYMITMIMVIGALSVEGVVTRTWPGLDLMRSFEIPGLIFERFESFLLVIWIMQLFATFIITFYAASLGVSQVFKKKPLSCMFGLLPVIYILSCMPKNENDVFILGDTVSHIALYIFGALPILLLVISKWRKRGEK.

10 helical membrane passes run 8 to 28, 41 to 61, 84 to 104, 113 to 133, 149 to 169, 189 to 209, 218 to 238, 273 to 293, 305 to 325, and 335 to 355; these read ITTAQATIIIINYMLAAGVLT, DGWISVLLGGVLAVIAGMIIA, LGHLISIVFITYFLALGAFEV, FFLLEGTPSWAIIMTVLWIGL, MIFPITVIIFLTIALMSLGIF, VKTTNLSFTCSEIMFILVAFM, AVVIGTGVVTSFYMITMIMVI, FLLVIWIMQLFATFIITFYAA, PLSCMFGLLPVIYILSCMPKN, and TVSHIALYIFGALPILLLVIS.

Belongs to the amino acid-polyamine-organocation (APC) superfamily. Spore germination protein (SGP) (TC 2.A.3.9) family.

Its subcellular location is the cell membrane. Its function is as follows. Involved in the germinative response to L-alanine. Could be an amino acid transporter. The chain is Spore germination protein YndE (yndE) from Bacillus subtilis (strain 168).